The following is a 102-amino-acid chain: Large ribosomal subunit protein bL21 (102 aa).

Belongs to the bacterial ribosomal protein bL21 family. In terms of assembly, part of the 50S ribosomal subunit. Contacts protein L20.

This protein binds to 23S rRNA in the presence of protein L20. In Staphylococcus haemolyticus (strain JCSC1435), this protein is Large ribosomal subunit protein bL21.